Reading from the N-terminus, the 353-residue chain is N-acetyl-gamma-glutamyl-phosphate reductase (353 aa).

Cys155 is a catalytic residue.

The protein belongs to the NAGSA dehydrogenase family. Type 1 subfamily.

It localises to the cytoplasm. It catalyses the reaction N-acetyl-L-glutamate 5-semialdehyde + phosphate + NADP(+) = N-acetyl-L-glutamyl 5-phosphate + NADPH + H(+). The protein operates within amino-acid biosynthesis; L-arginine biosynthesis; N(2)-acetyl-L-ornithine from L-glutamate: step 3/4. Functionally, catalyzes the NADPH-dependent reduction of N-acetyl-5-glutamyl phosphate to yield N-acetyl-L-glutamate 5-semialdehyde. The polypeptide is N-acetyl-gamma-glutamyl-phosphate reductase (Microcystis aeruginosa (strain NIES-843 / IAM M-2473)).